Reading from the N-terminus, the 142-residue chain is Hemoglobin subunit alpha (142 aa).

The 141-residue stretch at 2 to 142 (VLSPADKSNV…VSTVLTSKYR (141 aa)) folds into the Globin domain. At Ser-4 the chain carries Phosphoserine. Lys-8 and Lys-12 each carry N6-succinyllysine. At Lys-17 the chain carries N6-acetyllysine; alternate. At Lys-17 the chain carries N6-succinyllysine; alternate. Tyr-25 carries the phosphotyrosine modification. Ser-36 carries the phosphoserine modification. At Lys-41 the chain carries N6-succinyllysine. Phosphoserine is present on Ser-50. O2 is bound at residue His-59. His-88 is a heme b binding site. Position 103 is a phosphoserine (Ser-103). The residue at position 109 (Thr-109) is a Phosphothreonine. 2 positions are modified to phosphoserine: Ser-125 and Ser-132. Phosphothreonine occurs at positions 135 and 138. Phosphoserine is present on Ser-139.

The protein belongs to the globin family. As to quaternary structure, heterotetramer of two alpha chains and two beta chains. In terms of tissue distribution, red blood cells.

Involved in oxygen transport from the lung to the various peripheral tissues. In terms of biological role, hemopressin acts as an antagonist peptide of the cannabinoid receptor CNR1. Hemopressin-binding efficiently blocks cannabinoid receptor CNR1 and subsequent signaling. The polypeptide is Hemoglobin subunit alpha (HBA) (Chlorocebus aethiops (Green monkey)).